Here is a 147-residue protein sequence, read N- to C-terminus: D-aminoacyl-tRNA deacylase (147 aa).

A Gly-cisPro motif, important for rejection of L-amino acids motif is present at residues 136 to 137; it reads GP.

This sequence belongs to the DTD family. Homodimer.

Its subcellular location is the cytoplasm. The enzyme catalyses glycyl-tRNA(Ala) + H2O = tRNA(Ala) + glycine + H(+). It catalyses the reaction a D-aminoacyl-tRNA + H2O = a tRNA + a D-alpha-amino acid + H(+). In terms of biological role, an aminoacyl-tRNA editing enzyme that deacylates mischarged D-aminoacyl-tRNAs. Also deacylates mischarged glycyl-tRNA(Ala), protecting cells against glycine mischarging by AlaRS. Acts via tRNA-based rather than protein-based catalysis; rejects L-amino acids rather than detecting D-amino acids in the active site. By recycling D-aminoacyl-tRNA to D-amino acids and free tRNA molecules, this enzyme counteracts the toxicity associated with the formation of D-aminoacyl-tRNA entities in vivo and helps enforce protein L-homochirality. The protein is D-aminoacyl-tRNA deacylase of Streptococcus pyogenes serotype M1.